The chain runs to 185 residues: FK506-binding protein 2 (185 aa).

The signal sequence occupies residues 1–20 (MQGLLLSLSLLASAAVGVLA). One can recognise a PPIase FKBP-type domain in the interval 41-129 (GDKINVHYKG…VFETELVGIE (89 aa)). A Prevents secretion from ER motif is present at residues 182-185 (HNEL).

It belongs to the FKBP-type PPIase family. FKBP2 subfamily.

It is found in the endoplasmic reticulum. The enzyme catalyses [protein]-peptidylproline (omega=180) = [protein]-peptidylproline (omega=0). Inhibited by both FK506 and rapamycin. Its function is as follows. PPIases accelerate the folding of proteins. It catalyzes the cis-trans isomerization of proline imidic peptide bonds in oligopeptides. This chain is FK506-binding protein 2 (FPR2), found in Podospora anserina (Pleurage anserina).